The chain runs to 146 residues: Hemoglobin subunit beta (146 aa).

Residue V1 is modified to N-acetylvaline. Positions 2-146 constitute a Globin domain; sequence HLTGEEKSAV…VANALAHKYH (145 aa). T12 is subject to Phosphothreonine. A Phosphoserine modification is found at S44. At K59 the chain carries N6-acetyllysine. H63 is a binding site for heme b. The residue at position 82 (K82) is an N6-acetyllysine. H92 is a heme b binding site. The residue at position 93 (C93) is an S-nitrosocysteine. At K144 the chain carries N6-acetyllysine.

It belongs to the globin family. Heterotetramer of two alpha chains and two beta chains. As to expression, red blood cells.

Involved in oxygen transport from the lung to the various peripheral tissues. This Mico argentatus (Silvery marmoset) protein is Hemoglobin subunit beta (HBB).